A 433-amino-acid polypeptide reads, in one-letter code: GPI mannosyltransferase 2 (433 aa).

Residue M1 is a topological domain, cytoplasmic. A helical transmembrane segment spans residues 2 to 22 (IVGLTLYFVLFRSIQYLLVFL). Topologically, residues 23–109 (TPIRQFDTST…NNDSIYHALR (87 aa)) are lumenal. N-linked (GlcNAc...) asparagine glycosylation is found at N69 and N101. Residues 110–130 (VGVAIENVLFYLSGIVLYFLT) form a helical membrane-spanning segment. The Cytoplasmic portion of the chain corresponds to 131–161 (KKIFSQNIRQSQFARTIAKKTSLLFFLTSAA). A helical transmembrane segment spans residues 162-182 (GFLTSIYSEPLSFFFAFVGIW). The Lumenal segment spans residues 183–215 (SRECSISVPVLGQFDISWRYWFPYSFISMACFT). A helical membrane pass occupies residues 216–236 (LASLNRSNCVLLGIYFIFDLI). At 237–243 (ELTKNRK) the chain is on the cytoplasmic side. Residues 244–264 (FVKAICFPLLSGSLMFSALLY) traverse the membrane as a helical segment. The Lumenal portion of the chain corresponds to 265–318 (QQYYLPYKTFCPQRGEWCKSQLFSSIFITKTSLYSYIQSHYWGVGLLKYWTPNN). A helical transmembrane segment spans residues 319 to 339 (IPNFLFAVPNIIILIYSSIYF). The Cytoplasmic portion of the chain corresponds to 340-350 (SKIYPSYNLKA). A helical transmembrane segment spans residues 351–371 (LVWITRALVVIVCFFAHVQIL). Residues 372–409 (NRIASFLPLHLWYLADRLVKTSDPKKMENPKGDDKIVK) are Lumenal-facing. Residues 410 to 430 (FYIYWLAFWIPLQTILFAAFL) traverse the membrane as a helical segment. Residues 431–433 (PPA) lie on the Cytoplasmic side of the membrane.

This sequence belongs to the PIGV family. Part of the GPI mannosyltransferase 2 complex composed of GPI18 and PGA1.

It is found in the endoplasmic reticulum membrane. It functions in the pathway glycolipid biosynthesis; glycosylphosphatidylinositol-anchor biosynthesis. Its function is as follows. Mannosyltransferase involved in glycosylphosphatidylinositol-anchor biosynthesis. Responsible for the transfer of the second mannose to the glycosylphosphatidylinositol during GPI precursor assembly. This Saccharomyces cerevisiae (strain ATCC 204508 / S288c) (Baker's yeast) protein is GPI mannosyltransferase 2 (GPI18).